The following is a 374-amino-acid chain: uncharacterized protein (374 aa).

Residues 298-332 (TKEKLLKLHSEQKSLSEKINKLSGEKDIEQSMINN) adopt a coiled-coil conformation.

This is an uncharacterized protein from Acanthamoeba polyphaga (Amoeba).